Reading from the N-terminus, the 316-residue chain is 4-hydroxy-3-methylbut-2-enyl diphosphate reductase (316 aa).

Cys12 lines the [4Fe-4S] cluster pocket. Positions 41 and 74 each coordinate (2E)-4-hydroxy-3-methylbut-2-enyl diphosphate. Dimethylallyl diphosphate is bound by residues His41 and His74. His41 and His74 together coordinate isopentenyl diphosphate. [4Fe-4S] cluster is bound at residue Cys96. His124 serves as a coordination point for (2E)-4-hydroxy-3-methylbut-2-enyl diphosphate. Residue His124 participates in dimethylallyl diphosphate binding. Position 124 (His124) interacts with isopentenyl diphosphate. The active-site Proton donor is Glu126. A (2E)-4-hydroxy-3-methylbut-2-enyl diphosphate-binding site is contributed by Thr169. [4Fe-4S] cluster is bound at residue Cys199. Residues Ser227, Ser228, Asn229, and Ser271 each coordinate (2E)-4-hydroxy-3-methylbut-2-enyl diphosphate. Positions 227, 228, 229, and 271 each coordinate dimethylallyl diphosphate. 4 residues coordinate isopentenyl diphosphate: Ser227, Ser228, Asn229, and Ser271.

This sequence belongs to the IspH family. [4Fe-4S] cluster is required as a cofactor.

The catalysed reaction is isopentenyl diphosphate + 2 oxidized [2Fe-2S]-[ferredoxin] + H2O = (2E)-4-hydroxy-3-methylbut-2-enyl diphosphate + 2 reduced [2Fe-2S]-[ferredoxin] + 2 H(+). The enzyme catalyses dimethylallyl diphosphate + 2 oxidized [2Fe-2S]-[ferredoxin] + H2O = (2E)-4-hydroxy-3-methylbut-2-enyl diphosphate + 2 reduced [2Fe-2S]-[ferredoxin] + 2 H(+). It participates in isoprenoid biosynthesis; dimethylallyl diphosphate biosynthesis; dimethylallyl diphosphate from (2E)-4-hydroxy-3-methylbutenyl diphosphate: step 1/1. The protein operates within isoprenoid biosynthesis; isopentenyl diphosphate biosynthesis via DXP pathway; isopentenyl diphosphate from 1-deoxy-D-xylulose 5-phosphate: step 6/6. Its function is as follows. Catalyzes the conversion of 1-hydroxy-2-methyl-2-(E)-butenyl 4-diphosphate (HMBPP) into a mixture of isopentenyl diphosphate (IPP) and dimethylallyl diphosphate (DMAPP). Acts in the terminal step of the DOXP/MEP pathway for isoprenoid precursor biosynthesis. This Vibrio vulnificus (strain CMCP6) protein is 4-hydroxy-3-methylbut-2-enyl diphosphate reductase.